A 511-amino-acid polypeptide reads, in one-letter code: Mesoderm induction early response protein 1 (511 aa).

A compositionally biased stretch (low complexity) spans 1-16 (MAEPSVESSSPGGSAT). Residues 1 to 171 (MAEPSVESSS…EEESEEDEDY (171 aa)) form a disordered region. Ser-10 is subject to Phosphoserine. The segment covering 17-36 (SEDHEFDPSADMLVHDFDDE) has biased composition (basic and acidic residues). The span at 37–46 (RTLEEEEMME) shows a compositional bias: acidic residues. Residues 57–66 (DLAREGDMPI) show a composition bias toward basic and acidic residues. The span at 83–104 (EEEEEEEEEEEGEDDEDADNDD) shows a compositional bias: acidic residues. Residues 128–143 (QSSNDDPSQSVTSQDA) are compositionally biased toward polar residues. Position 140 is a phosphoserine (Ser-140). Position 154 is a phosphotyrosine (Tyr-154). A phosphoserine mark is found at Ser-159 and Ser-165. The segment covering 159–171 (SEIEEESEEDEDY) has biased composition (acidic residues). An ELM2 domain is found at 179 to 277 (KEIMVGSMFQ…EALRRLRFNV (99 aa)). Lys-238 participates in a covalent cross-link: Glycyl lysine isopeptide (Lys-Gly) (interchain with G-Cter in SUMO2). Positions 282-334 (EELSVWTEEECRNFEQGLKAYGKDFHLIQANKVRTRSVGECVAFYYMWKKSER) constitute an SANT domain. Positions 365 to 511 (ESESAASSRA…KFEEHENTND (147 aa)) are disordered. A phosphoserine mark is found at Ser-366, Ser-368, and Ser-376. Positions 397–408 (SSRNQNGVSSNG) are enriched in polar residues. 2 stretches are compositionally biased toward basic and acidic residues: residues 413–422 (LNKEEVKVEG) and 461–474 (ARNE…NERP). Residue Lys-419 forms a Glycyl lysine isopeptide (Lys-Gly) (interchain with G-Cter in SUMO2) linkage. The span at 481–493 (NSSGKESPGSSEF) shows a compositional bias: polar residues. Phosphoserine occurs at positions 482, 487, and 490. The span at 499 to 511 (SHGKFEEHENTND) shows a compositional bias: basic and acidic residues.

Interacts with HDAC1. Part of a complex containing at least CDYL, MIER1, MIER2, HDAC1 and HDAC2. As to expression, ubiquitously expressed. Isoform 1 is only expressed in testis.

It localises to the nucleus. Functionally, transcriptional repressor regulating the expression of a number of genes including SP1 target genes. Probably functions through recruitment of HDAC1 a histone deacetylase involved in chromatin silencing. The chain is Mesoderm induction early response protein 1 (Mier1) from Mus musculus (Mouse).